The sequence spans 186 residues: Riboflavin kinase (186 aa).

Residues T42 and N44 each contribute to the Mg(2+) site. E123 functions as the Nucleophile in the catalytic mechanism.

The protein belongs to the flavokinase family. Zn(2+) is required as a cofactor. It depends on Mg(2+) as a cofactor.

The catalysed reaction is riboflavin + ATP = FMN + ADP + H(+). It functions in the pathway cofactor biosynthesis; FMN biosynthesis; FMN from riboflavin (ATP route): step 1/1. In terms of biological role, catalyzes the phosphorylation of riboflavin (vitamin B2) to form flavin mononucleotide (FMN) coenzyme. The sequence is that of Riboflavin kinase (FMN1) from Eremothecium gossypii (strain ATCC 10895 / CBS 109.51 / FGSC 9923 / NRRL Y-1056) (Yeast).